The primary structure comprises 135 residues: Large ribosomal subunit protein uL16c (135 aa).

It belongs to the universal ribosomal protein uL16 family. In terms of assembly, part of the 50S ribosomal subunit.

It is found in the plastid. Its subcellular location is the chloroplast. In Platanus occidentalis (Sycamore), this protein is Large ribosomal subunit protein uL16c.